Consider the following 888-residue polypeptide: MELSLSPKETEIRPNTIPDLKVDATFRKVAKHAITFAIWKIDEDRLEAVQRSHYGTFYDSCAYIIYAASLSGHYANHETITREQKPNVSLERYIHYWLGKNVSEQNRSNVVHKIQELDSYLGNISSIYRETQNLESARFLSYFKKGYDVRSGALISAPQRPRLFQLYARKWLRSIEVATIDWSHFNSDYVMVLQTDNLTYVWIGRSSSGIERRSALDWVQKHCSGSPITIVDDGYEQAMSQEHKELWNTMLPLKKRMVCQASQLVSEYADYNSNKFRIYKCNQRGRLHLDQLDVGMPAKDDLSDAHGVYLLDNYGQSIWLWVGGQAPQADALSAMGNGRAFVKKKKYPDNTLVVRVLEGHEPVEFKRLFANWLNVWQENTRGHKPVSTKFGKLDAHSLCERPKMAADTQLVDDGRGERVIYRVFGDQVQEVPISKTVVFTTNASFVVKYSVQCATVVPADLASVGIKTIIYQWNGSEASVESISRADKFAKASFDGLKEPGMFVQLYEFDEPPHFLQIFEGKLIIRRGQRTEMPYNGNSNALLDTFLLKVYGDASYNAKAVEETHLSSISSKDCYVIKTNHVWVWCGQSSTGDAREMAKAVGALMGENSLVLEGKESKEFWQSVAMYFNQTLVINGNGNSCSSSTSSSSGAGSMCNGSSNGGNISPTLSNNCYLNTSVPSKPRPPVQLFLVWWQQSSLRYEEILGFDQQDLSSDCTYILDTGSLTYVWLGSQAPNQERYTAIAQSYVQNAPFGRRSATALAVVRQFQEPNVFKGFFESWQNDYGKNFHSYEKMRKDLGNKVTSNCCFASEGSALILNNRQKDFDGHKKYPLTVLIQEMDMLPPDINPLKREVHLTHDDFVSVFNMSFYEFDELPKWKKMELKKQFKLF.

The stretch at 307–366 is one Gelsolin-like repeat; it reads GVYLLDNYGQSIWLWVGGQAPQADALSAMGNGRAFVKKKKYPDNTLVVRVLEGHEPVEFK. Positions 823 to 888 constitute an HP domain; the sequence is FDGHKKYPLT…MELKKQFKLF (66 aa).

The protein belongs to the villin/gelsolin family. In terms of tissue distribution, germline specific in adult flies.

Its function is as follows. Required for the formation of cytoplasmic actin filament bundles in nurse cells, possibly by regulating both the polymerization and organization of actin filaments. Mutations in quail result in female sterility due to the disruption of cytoplasmic transport from the nurse cells into the oocyte late in oogenesis. This chain is Villin-like protein quail (qua), found in Drosophila melanogaster (Fruit fly).